The sequence spans 460 residues: A-type ATP synthase subunit B (460 aa).

Belongs to the ATPase alpha/beta chains family. Has multiple subunits with at least A(3), B(3), C, D, E, F, H, I and proteolipid K(x).

The protein localises to the cell membrane. In terms of biological role, component of the A-type ATP synthase that produces ATP from ADP in the presence of a proton gradient across the membrane. The B chain is a regulatory subunit. The polypeptide is A-type ATP synthase subunit B (Methanosarcina barkeri).